The primary structure comprises 20 residues: Cytochrome P450 2A7 (20 aa).

It belongs to the cytochrome P450 family. It depends on heme as a cofactor.

Its subcellular location is the endoplasmic reticulum membrane. The protein localises to the microsome membrane. The catalysed reaction is an organic molecule + reduced [NADPH--hemoprotein reductase] + O2 = an alcohol + oxidized [NADPH--hemoprotein reductase] + H2O + H(+). Its function is as follows. Exhibits a high coumarin 7-hydroxylase activity. The protein is Cytochrome P450 2A7 (CYP2A7) of Papio sp. (Baboon).